Consider the following 419-residue polypeptide: Histidine--tRNA ligase (419 aa).

The protein belongs to the class-II aminoacyl-tRNA synthetase family.

It localises to the cytoplasm. The catalysed reaction is tRNA(His) + L-histidine + ATP = L-histidyl-tRNA(His) + AMP + diphosphate + H(+). The sequence is that of Histidine--tRNA ligase from Pyrobaculum aerophilum (strain ATCC 51768 / DSM 7523 / JCM 9630 / CIP 104966 / NBRC 100827 / IM2).